Reading from the N-terminus, the 627-residue chain is Neutral endopeptidase (627 aa).

The 627-residue stretch at 1–627 (MTRIQDDLFA…RAPENRLKIW (627 aa)) folds into the Peptidase M13 domain. H475 is a binding site for Zn(2+). Residue E476 is part of the active site. 2 residues coordinate Zn(2+): H479 and E535. D539 serves as the catalytic Proton donor.

Belongs to the peptidase M13 family. As to quaternary structure, monomer. Requires Zn(2+) as cofactor.

The protein resides in the cytoplasm. Functionally, endopeptidase with broad substrate specificity for several oligopeptides. In Lactococcus lactis subsp. cremoris (Streptococcus cremoris), this protein is Neutral endopeptidase (pepO).